Reading from the N-terminus, the 80-residue chain is MGSTKTLVTCFLTIILAVSLSNHNVLAIDAGIKGFDTDHCDTRCYGRDECMNYCIKAGFPKGGQCGSLCIPCGFKCCCQK.

An N-terminal signal peptide occupies residues 1–27 (MGSTKTLVTCFLTIILAVSLSNHNVLA). Disulfide bonds link Cys40–Cys78, Cys44–Cys65, Cys50–Cys76, and Cys54–Cys77.

The protein belongs to the DEFL family.

Its subcellular location is the secreted. The chain is Defensin-like protein 46 from Arabidopsis thaliana (Mouse-ear cress).